Reading from the N-terminus, the 591-residue chain is L-fucose isomerase (591 aa).

Residues E337 and D361 each act as proton acceptor in the active site. Mn(2+) contacts are provided by E337, D361, and H528.

Belongs to the L-fucose isomerase family. Homohexamer. It depends on Mn(2+) as a cofactor.

It is found in the cytoplasm. It carries out the reaction L-fucose = L-fuculose. It participates in carbohydrate degradation; L-fucose degradation; L-lactaldehyde and glycerone phosphate from L-fucose: step 1/3. Its function is as follows. Converts the aldose L-fucose into the corresponding ketose L-fuculose. This chain is L-fucose isomerase, found in Klebsiella pneumoniae subsp. pneumoniae (strain ATCC 700721 / MGH 78578).